The sequence spans 229 residues: UPF0758 protein Cagg_0777 (229 aa).

An MPN domain is found at 105 to 227; the sequence is PIRSPGDVAA…YVSLRERGIG (123 aa). Residues histidine 176, histidine 178, and aspartate 189 each coordinate Zn(2+). Residues 176–189 carry the JAMM motif motif; it reads HNHPSGEATPSPED.

It belongs to the UPF0758 family.

The sequence is that of UPF0758 protein Cagg_0777 from Chloroflexus aggregans (strain MD-66 / DSM 9485).